The following is a 369-amino-acid chain: sn-glycerol-3-phosphate import ATP-binding protein UgpC (369 aa).

The 232-residue stretch at 4–235 folds into the ABC transporter domain; sequence LSLRNVQKTY…PASTFVAGFI (232 aa). 37 to 44 is a binding site for ATP; sequence GPSGCGKS.

The protein belongs to the ABC transporter superfamily. sn-glycerol-3-phosphate importer (TC 3.A.1.1.3) family. In terms of assembly, the complex is composed of two ATP-binding proteins (UgpC), two transmembrane proteins (UgpA and UgpE) and a solute-binding protein (UgpB).

The protein resides in the cell inner membrane. The enzyme catalyses sn-glycerol 3-phosphate(out) + ATP + H2O = sn-glycerol 3-phosphate(in) + ADP + phosphate + H(+). In terms of biological role, part of the ABC transporter complex UgpBAEC involved in sn-glycerol-3-phosphate (G3P) import. Responsible for energy coupling to the transport system. The chain is sn-glycerol-3-phosphate import ATP-binding protein UgpC from Cupriavidus pinatubonensis (strain JMP 134 / LMG 1197) (Cupriavidus necator (strain JMP 134)).